We begin with the raw amino-acid sequence, 264 residues long: Thymidylate synthase (264 aa).

Residue Arg21 coordinates dUMP. His51 is a (6R)-5,10-methylene-5,6,7,8-tetrahydrofolate binding site. A dUMP-binding site is contributed by 126 to 127 (RR). The Nucleophile role is filled by Cys146. DUMP-binding positions include 166 to 169 (RSAD), Asn177, and 207 to 209 (HIY). Asp169 serves as a coordination point for (6R)-5,10-methylene-5,6,7,8-tetrahydrofolate. Ser263 is a binding site for (6R)-5,10-methylene-5,6,7,8-tetrahydrofolate.

This sequence belongs to the thymidylate synthase family. Bacterial-type ThyA subfamily. As to quaternary structure, homodimer.

Its subcellular location is the cytoplasm. It carries out the reaction dUMP + (6R)-5,10-methylene-5,6,7,8-tetrahydrofolate = 7,8-dihydrofolate + dTMP. The protein operates within pyrimidine metabolism; dTTP biosynthesis. In terms of biological role, catalyzes the reductive methylation of 2'-deoxyuridine-5'-monophosphate (dUMP) to 2'-deoxythymidine-5'-monophosphate (dTMP) while utilizing 5,10-methylenetetrahydrofolate (mTHF) as the methyl donor and reductant in the reaction, yielding dihydrofolate (DHF) as a by-product. This enzymatic reaction provides an intracellular de novo source of dTMP, an essential precursor for DNA biosynthesis. The protein is Thymidylate synthase of Bacillus velezensis (strain DSM 23117 / BGSC 10A6 / LMG 26770 / FZB42) (Bacillus amyloliquefaciens subsp. plantarum).